We begin with the raw amino-acid sequence, 120 residues long: NAD(P)H-quinone oxidoreductase subunit 3, chloroplastic (120 aa).

A run of 3 helical transmembrane segments spans residues 9 to 29 (IFWA…FISG), 64 to 84 (MFAL…PWAM), and 88 to 108 (VLGL…IVGL).

This sequence belongs to the complex I subunit 3 family. As to quaternary structure, NDH is composed of at least 16 different subunits, 5 of which are encoded in the nucleus.

It localises to the plastid. The protein resides in the chloroplast thylakoid membrane. The catalysed reaction is a plastoquinone + NADH + (n+1) H(+)(in) = a plastoquinol + NAD(+) + n H(+)(out). It catalyses the reaction a plastoquinone + NADPH + (n+1) H(+)(in) = a plastoquinol + NADP(+) + n H(+)(out). Functionally, NDH shuttles electrons from NAD(P)H:plastoquinone, via FMN and iron-sulfur (Fe-S) centers, to quinones in the photosynthetic chain and possibly in a chloroplast respiratory chain. The immediate electron acceptor for the enzyme in this species is believed to be plastoquinone. Couples the redox reaction to proton translocation, and thus conserves the redox energy in a proton gradient. The sequence is that of NAD(P)H-quinone oxidoreductase subunit 3, chloroplastic from Jasminum nudiflorum (Winter jasmine).